Consider the following 155-residue polypeptide: Protein-export protein SecB (155 aa).

The protein belongs to the SecB family. As to quaternary structure, homotetramer, a dimer of dimers. One homotetramer interacts with 1 SecA dimer.

It localises to the cytoplasm. One of the proteins required for the normal export of preproteins out of the cell cytoplasm. It is a molecular chaperone that binds to a subset of precursor proteins, maintaining them in a translocation-competent state. It also specifically binds to its receptor SecA. The chain is Protein-export protein SecB from Psychromonas ingrahamii (strain DSM 17664 / CCUG 51855 / 37).